Reading from the N-terminus, the 430-residue chain is Histidine--tRNA ligase (430 aa).

Belongs to the class-II aminoacyl-tRNA synthetase family. Homodimer.

It localises to the cytoplasm. The catalysed reaction is tRNA(His) + L-histidine + ATP = L-histidyl-tRNA(His) + AMP + diphosphate + H(+). The sequence is that of Histidine--tRNA ligase from Lactococcus lactis subsp. lactis (strain IL1403) (Streptococcus lactis).